An 821-amino-acid chain; its full sequence is Ribonuclease R (821 aa).

Positions 267–593 constitute an RNB domain; that stretch reads RVDLRALPLV…LLHRAIKYLI (327 aa). In terms of domain architecture, S1 motif spans 652–733; it reads GEELEGVVAN…DDRQIDFELV (82 aa). Positions 739–821 are disordered; it reads LRGQGKTAKK…KSGKVRDKTK (83 aa). 2 stretches are compositionally biased toward basic and acidic residues: residues 748–764 and 774–794; these read KRADEARAKAQGKKEAA and TKSELKPQVEATRRPDSEGRS. Residues 795 to 814 are compositionally biased toward basic residues; sequence KPKKTKAPKKRKDQARKKSG.

It belongs to the RNR ribonuclease family. RNase R subfamily.

It localises to the cytoplasm. The enzyme catalyses Exonucleolytic cleavage in the 3'- to 5'-direction to yield nucleoside 5'-phosphates.. 3'-5' exoribonuclease that releases 5'-nucleoside monophosphates and is involved in maturation of structured RNAs. In Vibrio cholerae serotype O1 (strain ATCC 39315 / El Tor Inaba N16961), this protein is Ribonuclease R.